A 125-amino-acid chain; its full sequence is Prefoldin subunit beta (125 aa).

This sequence belongs to the prefoldin subunit beta family. In terms of assembly, heterohexamer of two alpha and four beta subunits.

It is found in the cytoplasm. Its function is as follows. Molecular chaperone capable of stabilizing a range of proteins. Seems to fulfill an ATP-independent, HSP70-like function in archaeal de novo protein folding. The sequence is that of Prefoldin subunit beta from Halobacterium salinarum (strain ATCC 29341 / DSM 671 / R1).